The following is a 565-amino-acid chain: Proline--tRNA ligase (565 aa).

It belongs to the class-II aminoacyl-tRNA synthetase family. ProS type 1 subfamily. As to quaternary structure, homodimer.

The protein resides in the cytoplasm. It catalyses the reaction tRNA(Pro) + L-proline + ATP = L-prolyl-tRNA(Pro) + AMP + diphosphate. In terms of biological role, catalyzes the attachment of proline to tRNA(Pro) in a two-step reaction: proline is first activated by ATP to form Pro-AMP and then transferred to the acceptor end of tRNA(Pro). As ProRS can inadvertently accommodate and process non-cognate amino acids such as alanine and cysteine, to avoid such errors it has two additional distinct editing activities against alanine. One activity is designated as 'pretransfer' editing and involves the tRNA(Pro)-independent hydrolysis of activated Ala-AMP. The other activity is designated 'posttransfer' editing and involves deacylation of mischarged Ala-tRNA(Pro). The misacylated Cys-tRNA(Pro) is not edited by ProRS. This Francisella tularensis subsp. tularensis (strain WY96-3418) protein is Proline--tRNA ligase.